The following is a 454-amino-acid chain: Divalent metal cation transporter MntH (454 aa).

The segment at 1-21 (MSDAEATAPRSSWRFAGRDED) is disordered. 11 helical membrane passes run 45–65 (LFAF…PGNW), 78–98 (TLLF…ALAA), 122–142 (FVLW…EVIG), 153–173 (IPLI…LLLM), 182–202 (AFVI…IFVA), 220–240 (IVTN…TVMP), 275–295 (IALM…AVAF), 312–332 (LLSP…ALLA), 368–388 (GLAI…GTGQ), 389–409 (LLVF…VPLV), and 426–446 (GVAA…FKLL).

It belongs to the NRAMP family.

The protein resides in the cell inner membrane. H(+)-stimulated, divalent metal cation uptake system. This Mesorhizobium japonicum (strain LMG 29417 / CECT 9101 / MAFF 303099) (Mesorhizobium loti (strain MAFF 303099)) protein is Divalent metal cation transporter MntH.